A 798-amino-acid polypeptide reads, in one-letter code: Protocadherin beta-10 (798 aa).

Positions 1–26 are cleaved as a signal peptide; the sequence is MAVRELCFSRQRQVLFLFLFWGVSLA. At 27-690 the chain is on the extracellular side; sequence GSGFGRYSVT…AQADLLTVYL (664 aa). 5 consecutive Cadherin domains span residues 35-133, 138-242, 247-347, 352-451, and 456-561; these read VTEE…APVF, TVLK…APQF, YETQ…PPEL, FSNS…APAF, and YTLF…SPFV. Asn-169 carries N-linked (GlcNAc...) asparagine glycosylation. N-linked (GlcNAc...) asparagine glycosylation is found at Asn-418 and Asn-436. N-linked (GlcNAc...) asparagine glycosylation occurs at Asn-567. The Cadherin 6 domain maps to 568–671; sequence GSAPCTELVP…LVDGFSQPYL (104 aa). The helical transmembrane segment at 691 to 711 threads the bilayer; that stretch reads VVALASVSSLFLFSVLLFVAV. Over 712-798 the chain is Cytoplasmic; the sequence is RLCRRSRAAS…FRNSFGFNIQ (87 aa).

The protein localises to the cell membrane. Its function is as follows. Potential calcium-dependent cell-adhesion protein. May be involved in the establishment and maintenance of specific neuronal connections in the brain. The chain is Protocadherin beta-10 (PCDHB10) from Pan troglodytes (Chimpanzee).